The following is a 1571-amino-acid chain: Phosphatidylinositol 3-kinase 1 (1571 aa).

The segment covering 1–73 has biased composition (low complexity); that stretch reads MNSIESSSND…NNDNNNNNNN (73 aa). Disordered regions lie at residues 1-119, 157-195, and 283-430; these read MNSI…HVNN, GYDV…RTRN, and NSKL…IIKR. The segment covering 74 to 85 has biased composition (basic and acidic residues); the sequence is IDKKRKDSKNKQ. The span at 101-119 shows a compositional bias: low complexity; that stretch reads NSNDSNCSSGSSSGGHVNN. The segment covering 283 to 292 has biased composition (basic and acidic residues); it reads NSKLDTEEKP. Positions 294–324 are enriched in low complexity; the sequence is TTTTTTTTTSTSISTSTPTTTTTTTTNTSTT. Residues 325–337 show a composition bias toward polar residues; sequence NDITIKPKTSPTK. Low complexity-rich tracts occupy residues 360–382 and 405–424; these read KVST…PTGK and NNTN…NNNN. The PI3K-ABD domain occupies 530–627; the sequence is IKTSFNILFL…IPKLKVIEKS (98 aa). Residues 700–789 enclose the PI3K-RBD domain; it reads GNKILISIFL…GTKPQLTLIQ (90 aa). Residues 851-1020 form the C2 PI3K-type domain; it reads IKKPFRVKVM…GLTLEFEEFN (170 aa). The PIK helical domain occupies 1040-1216; sequence QPPTNINSNE…GILLESYLYA (177 aa). A PI3K/PI4K catalytic domain is found at 1280 to 1558; the sequence is IINKSKYMDS…LIHESLATKT (279 aa). A G-loop region spans residues 1286–1292; it reads YMDSKKL. The segment at 1424–1432 is catalytic loop; that stretch reads GIGDRHNDN. The segment at 1443 to 1469 is activation loop; it reads HIDFGHFLGNYKKKFGFKRERAPFVFT.

The protein belongs to the PI3/PI4-kinase family.

It catalyses the reaction a 1,2-diacyl-sn-glycero-3-phospho-(1D-myo-inositol) + ATP = a 1,2-diacyl-sn-glycero-3-phospho-(1D-myo-inositol-3-phosphate) + ADP + H(+). In Dictyostelium discoideum (Social amoeba), this protein is Phosphatidylinositol 3-kinase 1 (pikA).